Reading from the N-terminus, the 180-residue chain is Large ribosomal subunit protein uL16 (180 aa).

This sequence belongs to the universal ribosomal protein uL16 family.

The protein is Large ribosomal subunit protein uL16 of Hyperthermus butylicus (strain DSM 5456 / JCM 9403 / PLM1-5).